The sequence spans 172 residues: Nicotinamide-nucleotide adenylyltransferase (172 aa).

The protein belongs to the archaeal NMN adenylyltransferase family.

The protein localises to the cytoplasm. It catalyses the reaction beta-nicotinamide D-ribonucleotide + ATP + H(+) = diphosphate + NAD(+). Its pathway is cofactor biosynthesis; NAD(+) biosynthesis; NAD(+) from nicotinamide D-ribonucleotide: step 1/1. This chain is Nicotinamide-nucleotide adenylyltransferase, found in Saccharolobus solfataricus (strain ATCC 35092 / DSM 1617 / JCM 11322 / P2) (Sulfolobus solfataricus).